Here is a 491-residue protein sequence, read N- to C-terminus: Putative F-box/LRR-repeat protein At3g59230 (491 aa).

Residues 11 to 57 enclose the F-box domain; the sequence is KDIINSLPEALIYHILSFLSTKEAAITSLLSRKWRYFFAFVPNLDFD. 7 LRR repeats span residues 127–154, 156–182, 184–209, 325–351, 352–377, 419–444, and 472–491; these read LSIASDTTYLFPSKVFVSKSLVRLRIEA, NGLAFGSLVIDVGDVSLPKLKTLYLDS, ELDYQIICLAKLLSGCHVLEELVMID, ASTVEVLTFRCKAIPIFNNLTRLTIES, NTKVGWDSLPNLLKNCPNLKTLVFQG, NDKTELEQTKHFLELMPHLEQLNIYY, and VQVISDNLTLSVTLPSSSSI.

In Arabidopsis thaliana (Mouse-ear cress), this protein is Putative F-box/LRR-repeat protein At3g59230.